The primary structure comprises 400 residues: Elongation factor Tu (400 aa).

Residues 10 to 210 (KPHCNVGTIG…VDSYIPIPPR (201 aa)) form the tr-type G domain. A G1 region spans residues 19-26 (GHVDHGKT). 19-26 (GHVDHGKT) contributes to the GTP binding site. Thr-26 provides a ligand contact to Mg(2+). A G2 region spans residues 60 to 64 (GLTIA). The segment at 81 to 84 (DCPG) is G3. Residues 81–85 (DCPGH) and 136–139 (NKCD) each bind GTP. Residues 136 to 139 (NKCD) are G4. The G5 stretch occupies residues 174–176 (SAI).

The protein belongs to the TRAFAC class translation factor GTPase superfamily. Classic translation factor GTPase family. EF-Tu/EF-1A subfamily. Monomer.

Its subcellular location is the cytoplasm. It carries out the reaction GTP + H2O = GDP + phosphate + H(+). Functionally, GTP hydrolase that promotes the GTP-dependent binding of aminoacyl-tRNA to the A-site of ribosomes during protein biosynthesis. The chain is Elongation factor Tu from Dehalococcoides mccartyi (strain ATCC BAA-2266 / KCTC 15142 / 195) (Dehalococcoides ethenogenes (strain 195)).